Reading from the N-terminus, the 398-residue chain is Candidapepsin-2 (398 aa).

The signal sequence occupies residues 1–18; sequence MFLKNIFIGLAIALLVDA. The propeptide at 19-56 is activation peptide; the sequence is TPTTTKRSAGFVALDFSVVKTPKAFPVTNGQEGKTSKR. The region spanning 70–384 is the Peptidase A1 domain; it reads YAADITVGSN…DLDNNEISLA (315 aa). The active site involves Asp88. Residue 88 to 90 participates in pepstatin A binding; it reads DTG. Cys103 and Cys115 are oxidised to a cystine. Pepstatin A-binding positions include 141–142 and 274–278; these read GD and DSGTT. Asp274 is an active-site residue. Residues Cys312 and Cys350 are joined by a disulfide bond. 2 N-linked (GlcNAc...) asparagine glycosylation sites follow: Asn313 and Asn321.

The protein belongs to the peptidase A1 family. Monomer. O-glycosylated.

It localises to the secreted. The enzyme catalyses Preferential cleavage at the carboxyl of hydrophobic amino acids, but fails to cleave 15-Leu-|-Tyr-16, 16-Tyr-|-Leu-17 and 24-Phe-|-Phe-25 of insulin B chain. Activates trypsinogen, and degrades keratin.. This is Candidapepsin-2 (SAP2) from Candida albicans (strain WO-1) (Yeast).